The primary structure comprises 379 residues: Cyclic di-GMP phosphodiesterase PdeB (379 aa).

The region spanning 114–310 (FYKKQKKIFI…PLDFIVELND (197 aa)) is the HD-GYP domain.

The cofactor is Mn(2+).

It catalyses the reaction 3',3'-c-di-GMP + 2 H2O = 2 GMP + 2 H(+). Its function is as follows. Phosphodiesterase (PDE) that catalyzes the hydrolysis of cyclic diguanylate (c-di-GMP) to GMP. The polypeptide is Cyclic di-GMP phosphodiesterase PdeB (Borreliella burgdorferi (strain ATCC 35210 / DSM 4680 / CIP 102532 / B31) (Borrelia burgdorferi)).